Reading from the N-terminus, the 277-residue chain is Diaminopimelate epimerase (277 aa).

Residues N13, Q46, and N66 each contribute to the substrate site. The active-site Proton donor is the C75. Substrate is bound by residues G76 to N77, N160, N193, and E211 to R212. C220 (proton acceptor) is an active-site residue. G221–S222 is a substrate binding site.

Belongs to the diaminopimelate epimerase family. As to quaternary structure, homodimer.

It localises to the cytoplasm. The catalysed reaction is (2S,6S)-2,6-diaminopimelate = meso-2,6-diaminopimelate. It participates in amino-acid biosynthesis; L-lysine biosynthesis via DAP pathway; DL-2,6-diaminopimelate from LL-2,6-diaminopimelate: step 1/1. In terms of biological role, catalyzes the stereoinversion of LL-2,6-diaminopimelate (L,L-DAP) to meso-diaminopimelate (meso-DAP), a precursor of L-lysine and an essential component of the bacterial peptidoglycan. The polypeptide is Diaminopimelate epimerase (Legionella pneumophila (strain Corby)).